Here is a 101-residue protein sequence, read N- to C-terminus: Protein Tat (101 aa).

The tract at residues 1–20 is disordered; sequence MEPVDPNLEPWKHPGSQPTT. The segment at 1-24 is interaction with human CREBBP; sequence MEPVDPNLEPWKHPGSQPTTACSN. Positions 1-48 are transactivation; sequence MEPVDPNLEPWKHPGSQPTTACSNCYCKVCCWHCQLCFLKKGLGISYG. 3 residues coordinate Zn(2+): C22, C25, and C27. A cysteine-rich region spans residues 22-37; that stretch reads CSNCYCKVCCWHCQLC. K28 is subject to N6-acetyllysine; by host PCAF. Positions 30, 33, 34, and 37 each coordinate Zn(2+). Positions 38 to 48 are core; the sequence is FLKKGLGISYG. The interval 48-101 is disordered; the sequence is GKKKRKPRRGPPQGSKDHQTLIPKQPLPQSQRVSAGQEESKKKVESKAKTDRFA. Positions 49 to 57 match the Nuclear localization signal, RNA-binding (TAR), and protein transduction motif; the sequence is KKKRKPRRG. Residues 49-86 form an interaction with the host capping enzyme RNGTT region; the sequence is KKKRKPRRGPPQGSKDHQTLIPKQPLPQSQRVSAGQEE. Residues K50 and K51 each carry the N6-acetyllysine; by host EP300 and GCN5L2 modification. Asymmetric dimethylarginine; by host PRMT6 is present on R52. Residue K71 forms a Glycyl lysine isopeptide (Lys-Gly) (interchain with G-Cter in ubiquitin) linkage. Positions 85–101 are enriched in basic and acidic residues; the sequence is EESKKKVESKAKTDRFA.

The protein belongs to the lentiviruses Tat family. Interacts with host CCNT1. Associates with the P-TEFb complex composed at least of Tat, P-TEFb (CDK9 and CCNT1), TAR RNA, RNA Pol II. Recruits the HATs CREBBP, TAF1/TFIID, EP300, PCAF and GCN5L2. Interacts with host KAT5/Tip60; this interaction targets the latter to degradation. Interacts with the host deacetylase SIRT1. Interacts with host capping enzyme RNGTT; this interaction stimulates RNGTT. Binds to host KDR, and to the host integrins ITGAV/ITGB3 and ITGA5/ITGB1. Interacts with host KPNB1/importin beta-1 without previous binding to KPNA1/importin alpha-1. Interacts with EIF2AK2. Interacts with host nucleosome assembly protein NAP1L1; this interaction may be required for the transport of Tat within the nucleus, since the two proteins interact at the nuclear rim. Interacts with host C1QBP/SF2P32; this interaction involves lysine-acetylated Tat. Interacts with the host chemokine receptors CCR2, CCR3 and CXCR4. Interacts with host DPP4/CD26; this interaction may trigger an anti-proliferative effect. Interacts with host LDLR. Interacts with the host extracellular matrix metalloproteinase MMP1. Interacts with host PRMT6; this interaction mediates Tat's methylation. Interacts with, and is ubiquitinated by MDM2/Hdm2. Interacts with host PSMC3 and HTATIP2. Interacts with STAB1; this interaction may overcome SATB1-mediated repression of IL2 and IL2RA (interleukin) in T cells by binding to the same domain than HDAC1. Interacts (when acetylated) with human CDK13, thereby increasing HIV-1 mRNA splicing and promoting the production of the doubly spliced HIV-1 protein Nef. Interacts with host TBP; this interaction modulates the activity of transcriptional pre-initiation complex. Interacts with host RELA. Interacts with host PLSCR1; this interaction negatively regulates Tat transactivation activity by altering its subcellular distribution. Post-translationally, asymmetrical arginine methylation by host PRMT6 seems to diminish the transactivation capacity of Tat and affects the interaction with host CCNT1. In terms of processing, acetylation by EP300, CREBBP, GCN5L2/GCN5 and PCAF regulates the transactivation activity of Tat. EP300-mediated acetylation of Lys-50 promotes dissociation of Tat from the TAR RNA through the competitive binding to PCAF's bromodomain. In addition, the non-acetylated Tat's N-terminus can also interact with PCAF. PCAF-mediated acetylation of Lys-28 enhances Tat's binding to CCNT1. Lys-50 is deacetylated by SIRT1. Polyubiquitination by host MDM2 does not target Tat to degradation, but activates its transactivation function and fosters interaction with CCNT1 and TAR RNA. Post-translationally, phosphorylated by EIF2AK2 on serine and threonine residues adjacent to the basic region important for TAR RNA binding and function. Phosphorylation of Tat by EIF2AK2 is dependent on the prior activation of EIF2AK2 by dsRNA.

Its subcellular location is the host nucleus. The protein resides in the host nucleolus. The protein localises to the host cytoplasm. It localises to the secreted. Transcriptional activator that increases RNA Pol II processivity, thereby increasing the level of full-length viral transcripts. Recognizes a hairpin structure at the 5'-LTR of the nascent viral mRNAs referred to as the transactivation responsive RNA element (TAR) and recruits the cyclin T1-CDK9 complex (P-TEFb complex) that will in turn hyperphosphorylate the RNA polymerase II to allow efficient elongation. The CDK9 component of P-TEFb and other Tat-activated kinases hyperphosphorylate the C-terminus of RNA Pol II that becomes stabilized and much more processive. Other factors such as HTATSF1/Tat-SF1, SUPT5H/SPT5, and HTATIP2 are also important for Tat's function. Besides its effect on RNA Pol II processivity, Tat induces chromatin remodeling of proviral genes by recruiting the histone acetyltransferases (HATs) CREBBP, EP300 and PCAF to the chromatin. This also contributes to the increase in proviral transcription rate, especially when the provirus integrates in transcriptionally silent region of the host genome. To ensure maximal activation of the LTR, Tat mediates nuclear translocation of NF-kappa-B by interacting with host RELA. Through its interaction with host TBP, Tat may also modulate transcription initiation. Tat can reactivate a latently infected cell by penetrating in it and transactivating its LTR promoter. In the cytoplasm, Tat is thought to act as a translational activator of HIV-1 mRNAs. In terms of biological role, extracellular circulating Tat can be endocytosed by surrounding uninfected cells via the binding to several surface receptors such as CD26, CXCR4, heparan sulfate proteoglycans (HSPG) or LDLR. Neurons are rarely infected, but they internalize Tat via their LDLR. Through its interaction with nuclear HATs, Tat is potentially able to control the acetylation-dependent cellular gene expression. Modulates the expression of many cellular genes involved in cell survival, proliferation or in coding for cytokines or cytokine receptors. Tat plays a role in T-cell and neurons apoptosis. Tat induced neurotoxicity and apoptosis probably contribute to neuroAIDS. Circulating Tat also acts as a chemokine-like and/or growth factor-like molecule that binds to specific receptors on the surface of the cells, affecting many cellular pathways. In the vascular system, Tat binds to ITGAV/ITGB3 and ITGA5/ITGB1 integrins dimers at the surface of endothelial cells and competes with bFGF for heparin-binding sites, leading to an excess of soluble bFGF. This Human immunodeficiency virus type 1 group M subtype A (isolate U455) (HIV-1) protein is Protein Tat.